Reading from the N-terminus, the 189-residue chain is UPF0301 protein RT0098 (189 aa).

The protein belongs to the UPF0301 (AlgH) family.

The polypeptide is UPF0301 protein RT0098 (Rickettsia typhi (strain ATCC VR-144 / Wilmington)).